The sequence spans 482 residues: Proline--tRNA ligase (482 aa).

Residues Thr117, Glu119, and Arg148 each contribute to the L-proline site. The ATP site is built by Arg148, Glu150, Gln232, and Thr235. His237 contributes to the L-proline binding site. Position 269 (Ser269) interacts with ATP. An interaction with tRNA region spans residues Glu346–Lys376. 4 residues coordinate Zn(2+): Cys436, Cys441, Cys464, and Cys467.

Belongs to the class-II aminoacyl-tRNA synthetase family. ProS type 3 subfamily. As to quaternary structure, homodimer. The dimer is functionally asymmetric: only one of the two active sites at a time is able to form prolyl-adenylate, and only one tRNA molecule binds per dimer. Interacts with LeuRS, which enhances tRNA(Pro) aminoacylation.

It localises to the cytoplasm. It catalyses the reaction tRNA(Pro) + L-proline + ATP = L-prolyl-tRNA(Pro) + AMP + diphosphate. In terms of biological role, catalyzes the attachment of proline to tRNA(Pro) in a two-step reaction: proline is first activated by ATP to form Pro-AMP and then transferred to the acceptor end of tRNA(Pro). Can inadvertently accommodate and process cysteine. This is Proline--tRNA ligase (proS) from Methanothermobacter thermautotrophicus (strain ATCC 29096 / DSM 1053 / JCM 10044 / NBRC 100330 / Delta H) (Methanobacterium thermoautotrophicum).